The sequence spans 215 residues: Translation initiation factor IF-3 (215 aa).

The segment at 159 to 215 (SAEVQQPPKREGRNMIMFLGPRKTPLQKDKPEQATKAERTLPIAKPPGKTAAPAAAN) is disordered. Over residues 184 to 197 (LQKDKPEQATKAER) the composition is skewed to basic and acidic residues. Low complexity predominate over residues 200–215 (PIAKPPGKTAAPAAAN).

Belongs to the IF-3 family. In terms of assembly, monomer.

The protein resides in the cytoplasm. In terms of biological role, IF-3 binds to the 30S ribosomal subunit and shifts the equilibrium between 70S ribosomes and their 50S and 30S subunits in favor of the free subunits, thus enhancing the availability of 30S subunits on which protein synthesis initiation begins. This Synechococcus sp. (strain RCC307) protein is Translation initiation factor IF-3.